Consider the following 965-residue polypeptide: Valine--tRNA ligase (965 aa).

The disordered stretch occupies residues 1 to 22 (MENTPSHINKTEPSLDKTYSPQ). A 'HIGH' region motif is present at residues 56 to 66 (PNVTGSLHMGH). The 'KMSKS' region signature appears at 568–572 (KMSKS). Lysine 571 is a binding site for ATP. Positions 896-965 (LIDKATELDR…IEQQATIAAL (70 aa)) form a coiled coil.

Belongs to the class-I aminoacyl-tRNA synthetase family. ValS type 1 subfamily. Monomer.

It is found in the cytoplasm. The catalysed reaction is tRNA(Val) + L-valine + ATP = L-valyl-tRNA(Val) + AMP + diphosphate. Its function is as follows. Catalyzes the attachment of valine to tRNA(Val). As ValRS can inadvertently accommodate and process structurally similar amino acids such as threonine, to avoid such errors, it has a 'posttransfer' editing activity that hydrolyzes mischarged Thr-tRNA(Val) in a tRNA-dependent manner. In Yersinia pestis, this protein is Valine--tRNA ligase.